The chain runs to 305 residues: Oxygen-dependent coproporphyrinogen-III oxidase (305 aa).

Serine 92 contributes to the substrate binding site. A divalent metal cation contacts are provided by histidine 96 and histidine 106. Histidine 106 acts as the Proton donor in catalysis. 108 to 110 (NVR) contributes to the substrate binding site. 2 residues coordinate a divalent metal cation: histidine 145 and histidine 175. The important for dimerization stretch occupies residues 239 to 274 (YVEFNLLFDRGTLFGLQSGGRAESILISLPPLVRWE). Residue 257-259 (GGR) coordinates substrate.

Belongs to the aerobic coproporphyrinogen-III oxidase family. Homodimer. The cofactor is a divalent metal cation.

The protein localises to the cytoplasm. It carries out the reaction coproporphyrinogen III + O2 + 2 H(+) = protoporphyrinogen IX + 2 CO2 + 2 H2O. It participates in porphyrin-containing compound metabolism; protoporphyrin-IX biosynthesis; protoporphyrinogen-IX from coproporphyrinogen-III (O2 route): step 1/1. Involved in the heme biosynthesis. Catalyzes the aerobic oxidative decarboxylation of propionate groups of rings A and B of coproporphyrinogen-III to yield the vinyl groups in protoporphyrinogen-IX. This chain is Oxygen-dependent coproporphyrinogen-III oxidase, found in Xylella fastidiosa (strain 9a5c).